The primary structure comprises 116 residues: Protein Rev (116 aa).

Serine 5 is modified (phosphoserine; by host CK2). A homomultimerization region spans residues 18 to 26 (IIKILYQSN). The interval 26–48 (NPYSKPNGSRQARRNRRRRWRAR) is disordered. A Nuclear localization signal and RNA-binding (RRE) motif is present at residues 34-50 (SRQARRNRRRRWRARQN). A compositionally biased stretch (basic residues) spans 36-47 (QARRNRRRRWRA). A Nuclear export signal and binding to XPO1 motif is present at residues 73–84 (LQLPPIERLRLD). Serine 92 is subject to Phosphoserine; by host.

Belongs to the HIV-1 REV protein family. Homomultimer; when bound to the RRE. Multimeric assembly is essential for activity and may involve XPO1. Binds to human KPNB1, XPO1, TNPO1, RANBP5 and IPO7. Interacts with the viral Integrase. Interacts with human KHDRBS1. Interacts with human NAP1; this interaction decreases Rev multimerization and stimulates its activity. Interacts with human DEAD-box helicases DDX3 and DDX24; these interactions may serve for viral RNA export to the cytoplasm and packaging, respectively. Interacts with human PSIP1; this interaction may inhibit HIV-1 DNA integration by promoting dissociation of the Integrase-LEDGF/p75 complex. Asymmetrically arginine dimethylated at one site by host PRMT6. Methylation impairs the RNA-binding activity and export of viral RNA from the nucleus to the cytoplasm. In terms of processing, phosphorylated by protein kinase CK2. Presence of, and maybe binding to the N-terminus of the regulatory beta subunit of CK2 is necessary for CK2-mediated Rev's phosphorylation.

It is found in the host nucleus. The protein resides in the host nucleolus. It localises to the host cytoplasm. In terms of biological role, escorts unspliced or incompletely spliced viral pre-mRNAs (late transcripts) out of the nucleus of infected cells. These pre-mRNAs carry a recognition sequence called Rev responsive element (RRE) located in the env gene, that is not present in fully spliced viral mRNAs (early transcripts). This function is essential since most viral proteins are translated from unspliced or partially spliced pre-mRNAs which cannot exit the nucleus by the pathway used by fully processed cellular mRNAs. Rev itself is translated from a fully spliced mRNA that readily exits the nucleus. Rev's nuclear localization signal (NLS) binds directly to KPNB1/Importin beta-1 without previous binding to KPNA1/Importin alpha-1. KPNB1 binds to the GDP bound form of RAN (Ran-GDP) and targets Rev to the nucleus. In the nucleus, the conversion from Ran-GDP to Ran-GTP dissociates Rev from KPNB1 and allows Rev's binding to the RRE in viral pre-mRNAs. Rev multimerization on the RRE via cooperative assembly exposes its nuclear export signal (NES) to the surface. Rev can then form a complex with XPO1/CRM1 and Ran-GTP, leading to nuclear export of the complex. Conversion from Ran-GTP to Ran-GDP mediates dissociation of the Rev/RRE/XPO1/RAN complex, so that Rev can return to the nucleus for a subsequent round of export. Beside KPNB1, also seems to interact with TNPO1/Transportin-1, RANBP5/IPO5 and IPO7/RANBP7 for nuclear import. The nucleoporin-like HRB/RIP is an essential cofactor that probably indirectly interacts with Rev to release HIV RNAs from the perinuclear region to the cytoplasm. This Homo sapiens (Human) protein is Protein Rev.